We begin with the raw amino-acid sequence, 118 residues long: DNA-directed RNA polymerase subunit omega (118 aa).

A disordered region spans residues 78–104 (DEPEEDSMAMLMGGGQPDKPAEDDMSE).

This sequence belongs to the RNA polymerase subunit omega family. The RNAP catalytic core consists of 2 alpha, 1 beta, 1 beta' and 1 omega subunit. When a sigma factor is associated with the core the holoenzyme is formed, which can initiate transcription.

It carries out the reaction RNA(n) + a ribonucleoside 5'-triphosphate = RNA(n+1) + diphosphate. Promotes RNA polymerase assembly. Latches the N- and C-terminal regions of the beta' subunit thereby facilitating its interaction with the beta and alpha subunits. The protein is DNA-directed RNA polymerase subunit omega of Dinoroseobacter shibae (strain DSM 16493 / NCIMB 14021 / DFL 12).